Reading from the N-terminus, the 419-residue chain is Hyaluronidase-3 (419 aa).

The first 16 residues, 1 to 16 (MTMQLGLALVLGVAMC), serve as a signal peptide directing secretion. Disulfide bonds link C42–C331, C205–C220, C356–C367, C361–C395, and C397–C406. N69 carries N-linked (GlcNAc...) asparagine glycosylation. The Proton donor role is filled by E129. N215 carries N-linked (GlcNAc...) asparagine glycosylation. Positions 352–407 (AAMACSHQRCHGHGRCAWQDPGQLKVFLHLHPGGSPGAWESFSCRCYWGWAGPTCQ) constitute an EGF-like domain.

This sequence belongs to the glycosyl hydrolase 56 family. N-glycosylated. In terms of tissue distribution, highly expressed in bladder, spleen and liver. Expressed at low levels in the kidney.

The protein localises to the secreted. It is found in the cell membrane. Its subcellular location is the cytoplasmic vesicle. It localises to the secretory vesicle. The protein resides in the acrosome. The protein localises to the endoplasmic reticulum. It is found in the early endosome. It catalyses the reaction Random hydrolysis of (1-&gt;4)-linkages between N-acetyl-beta-D-glucosamine and D-glucuronate residues in hyaluronate.. Functionally, facilitates sperm penetration into the layer of cumulus cells surrounding the egg by digesting hyaluronic acid. Involved in induction of the acrosome reaction in the sperm. Involved in follicular atresia, the breakdown of immature ovarian follicles that are not selected to ovulate. Induces ovarian granulosa cell apoptosis, possibly via apoptotic signaling pathway involving CASP8 and CASP3 activation, and poly(ADP-ribose) polymerase (PARP) cleavage. Has no hyaluronidase activity in embryonic fibroblasts in vitro. Has no hyaluronidase activity in granulosa cells in vitro. The protein is Hyaluronidase-3 (HYAL3) of Sus scrofa (Pig).